The primary structure comprises 474 residues: Ribosomal protein uS12 methylthiotransferase RimO (474 aa).

The MTTase N-terminal domain occupies 37–147; it reads NRIGFVSLGC…VLNHVHKYVP (111 aa). [4Fe-4S] cluster contacts are provided by Cys-46, Cys-82, Cys-111, Cys-179, Cys-183, and Cys-186. The Radical SAM core domain maps to 165–402; sequence LTPKHYAYLK…MEVQAEISAE (238 aa). A TRAM domain is found at 405–471; it reads ARLVGRELDI…EHDLWAELVA (67 aa).

This sequence belongs to the methylthiotransferase family. RimO subfamily. The cofactor is [4Fe-4S] cluster.

It is found in the cytoplasm. It catalyses the reaction L-aspartate(89)-[ribosomal protein uS12]-hydrogen + (sulfur carrier)-SH + AH2 + 2 S-adenosyl-L-methionine = 3-methylsulfanyl-L-aspartate(89)-[ribosomal protein uS12]-hydrogen + (sulfur carrier)-H + 5'-deoxyadenosine + L-methionine + A + S-adenosyl-L-homocysteine + 2 H(+). Its function is as follows. Catalyzes the methylthiolation of an aspartic acid residue of ribosomal protein uS12. The sequence is that of Ribosomal protein uS12 methylthiotransferase RimO from Shewanella amazonensis (strain ATCC BAA-1098 / SB2B).